The chain runs to 93 residues: Antitoxin EndoAI (93 aa).

The protein belongs to the MazE/EndoAI family. As to quaternary structure, homodimer, forms a heterohexamer composed of alternating toxin and antitoxin homodimers which inhibits the toxin's endoribonuclease activity. Antitoxin prevents RNA binding to the endoribonuclease.

Functionally, antitoxin component of a type II toxin-antitoxin (TA) system. Antitoxin that directly inhibits activity of EndoA in vitro. Upon expression in E.coli counteracts inhibitory effect of endoribonuclease EndoA. The EndoA-EndoAI complex does not seem to bind its own promoter. This Bacillus subtilis (strain 168) protein is Antitoxin EndoAI.